We begin with the raw amino-acid sequence, 60 residues long: Mannitol-specific phosphotransferase enzyme IIA component (60 aa).

Residues 2 to 60 form the PTS EIIA type-2 domain; sequence SELFSNDNIFLNVNVNSQNEAIEKAGKALVDSGAVTDAYIQVVSTFMGNGLAIPHGTDD. The active-site Tele-phosphohistidine intermediate is histidine 56. Histidine 56 is subject to Phosphohistidine; by HPr.

Homodimer or homotrimer. Seems to be a monomer when not phosphorylated.

The protein localises to the cytoplasm. Its function is as follows. The phosphoenolpyruvate-dependent sugar phosphotransferase system (sugar PTS), a major carbohydrate active transport system, catalyzes the phosphorylation of incoming sugar substrates concomitantly with their translocation across the cell membrane. The enzyme II CmtAB PTS system is involved in D-mannitol transport. This is Mannitol-specific phosphotransferase enzyme IIA component from Staphylococcus aureus.